The chain runs to 1216 residues: Probable phospholipid-transporting ATPase 4 (1216 aa).

The Cytoplasmic segment spans residues 1-74 (MARGRIRSKL…TTRYNLITFF (74 aa)). Residues 75 to 96 (PKCLYEQFHRAANFYFLVAAIL) form a helical membrane-spanning segment. At 97–100 (SVFP) the chain is on the extracellular side. A helical transmembrane segment spans residues 101 to 123 (LSPFNKWSMIAPLVFVVGLSMLK). The Cytoplasmic segment spans residues 124–305 (EALEDWSRFM…SRIEKTMDYI (182 aa)). Residues 306–327 (IYTLLVLLILISCISSSGFAWE) form a helical membrane-spanning segment. The Extracellular segment spans residues 328–359 (TKFHMPKWWYLRPEEPENLTNPSNPVYAGFVH). Residues 360–377 (LITALLLYGYLIPISLYV) traverse the membrane as a helical segment. Residues 378–922 (SIEVVKVLQA…HGHWCYKRIA (545 aa)) are Cytoplasmic-facing. Catalysis depends on D425, which acts as the 4-aspartylphosphate intermediate. A Glycyl lysine isopeptide (Lys-Gly) (interchain with G-Cter in ubiquitin) cross-link involves residue K605. Residues D867 and D871 each contribute to the Mg(2+) site. The helical transmembrane segment at 923 to 942 (QMICYFFYKNIAFGLTLFYF) threads the bilayer. At 943–956 (EAFTGFSGQSVYND) the chain is on the extracellular side. The helical transmembrane segment at 957-976 (YYLLLFNVVLTSLPVIALGV) threads the bilayer. Topologically, residues 977 to 1006 (FEQDVSSEICLQFPALYQQGKKNLFFDWYR) are cytoplasmic. The helical transmembrane segment at 1007-1029 (ILGWMGNGVYSSLVIFFLNIGII) threads the bilayer. Over 1030-1042 (YEQAFRVSGQTAD) the chain is Extracellular. Residues 1043–1065 (MDAVGTTMFTCIIWAVNVQIALT) form a helical membrane-spanning segment. Residues 1066-1071 (VSHFTW) are Cytoplasmic-facing. A helical membrane pass occupies residues 1072-1092 (IQHVLIWGSIGLWYLFVALYG). The Extracellular portion of the chain corresponds to 1093–1109 (MMPPSLSGNIYRILVEI). Residues 1110-1134 (LAPAPIYWIATFLVTVTTVLPYFAH) traverse the membrane as a helical segment. Over 1135-1216 (ISFQRFLHPL…TQDTMSPRSV (82 aa)) the chain is Cytoplasmic. A disordered region spans residues 1195–1216 (LNKKQSNMSQFSTQDTMSPRSV). A compositionally biased stretch (polar residues) spans 1198–1216 (KQSNMSQFSTQDTMSPRSV).

The protein belongs to the cation transport ATPase (P-type) (TC 3.A.3) family. Type IV subfamily.

The protein resides in the membrane. It carries out the reaction ATP + H2O + phospholipidSide 1 = ADP + phosphate + phospholipidSide 2.. Involved in transport of phospholipids. This Arabidopsis thaliana (Mouse-ear cress) protein is Probable phospholipid-transporting ATPase 4.